Consider the following 182-residue polypeptide: Receptor activity-modifying protein 2 (182 aa).

An N-terminal signal peptide occupies residues 1-45 (MAPLRVERAPGGSQLAVTSAQRPAALRLPPLLLLLLLLLLGAVST). The Extracellular segment spans residues 46 to 150 (SPESLNQSHP…VQPTFSDPPE (105 aa)). 3 N-linked (GlcNAc...) asparagine glycosylation sites follow: Asn51, Asn92, and Asn137. Cystine bridges form between Cys76–Cys106 and Cys91–Cys138. The helical transmembrane segment at 151–172 (DVLLAMIIAPICLIPFLVTLVV) threads the bilayer. Residues 173–182 (WRSKDGDAQA) are Cytoplasmic-facing.

The protein belongs to the RAMP family. In terms of assembly, heterodimer of CALCRL and RAMP2; the interaction forms the receptor complex for adrenomedullin/ADM. Heterodimer of CALCR and RAMP2; interaction forms the AMYR2 receptor complex for calcitonin/CALC and amylin/IAPP.

It is found in the cell membrane. Functionally, accessory protein that interacts with and modulates the function of G-protein coupled receptors including calcitonin gene-related peptide type 1 receptor (CALCRL) and calcitonin receptor (CALCR). Required for the transport of CALCRL to the plasma membrane. Together with CALCRL, form a receptor complex for adrenomedullin/ADM. Together with CALCR, act as a receptor complex for calcitonin/CT/CALC. Together with CALCR, also act as a receptor complex for amylin/IAPP. In Rattus norvegicus (Rat), this protein is Receptor activity-modifying protein 2.